The primary structure comprises 169 residues: Small ribosomal subunit protein uS9 (169 aa).

Disordered regions lie at residues 1–29 (MVEP…TETP) and 128–169 (MDPE…YSKR). Acidic residues predominate over residues 9 to 21 (DVQEYDENSEEYP). Over residues 150-169 (VERKKAGLKKARKAPQYSKR) the composition is skewed to basic residues.

It belongs to the universal ribosomal protein uS9 family.

The sequence is that of Small ribosomal subunit protein uS9 from Thermobifida fusca (strain YX).